We begin with the raw amino-acid sequence, 464 residues long: Sugar transporter ERD6-like 1 (464 aa).

12 helical membrane-spanning segments follow: residues 23–43 (ITCGLLLSTSVAVTGSFVYGC), 72–92 (VMTLGGMITAAFSGKIAAVIG), 95–115 (QTMWIADVFCIFGWLAVAFAH), 125–145 (GFLGFGVGLISYVVPVYIAEI), 156–176 (FSNQLLQSFGISLMFFTGNFF), 180–200 (TLALLSAIPCGIQMICLFFIP), 263–283 (LIIGLGLMLLQQFCGSSAISA), 298–318 (IGTSILAVILVPQSIIVMFAV), 326–346 (LLMSSSIGLCICSFLIGLSYY), 359–379 (PILIVGLVGYVLSFGIGLGGL), 399–419 (LVTVSNWFFSWIIIFSFNFMM), and 424–444 (FGTYFIFAGVSLMSFVFVWTL).

Belongs to the major facilitator superfamily. Sugar transporter (TC 2.A.1.1) family.

Its subcellular location is the membrane. Sugar transporter. This is Sugar transporter ERD6-like 1 (SUGTL4) from Arabidopsis thaliana (Mouse-ear cress).